A 100-amino-acid chain; its full sequence is Urease subunit gamma (100 aa).

This sequence belongs to the urease gamma subunit family. In terms of assembly, heterotrimer of UreA (gamma), UreB (beta) and UreC (alpha) subunits. Three heterotrimers associate to form the active enzyme.

It is found in the cytoplasm. The enzyme catalyses urea + 2 H2O + H(+) = hydrogencarbonate + 2 NH4(+). It participates in nitrogen metabolism; urea degradation; CO(2) and NH(3) from urea (urease route): step 1/1. The chain is Urease subunit gamma from Polynucleobacter asymbioticus (strain DSM 18221 / CIP 109841 / QLW-P1DMWA-1) (Polynucleobacter necessarius subsp. asymbioticus).